The chain runs to 136 residues: MNKWVFCWVTLCLLTVETTHGDGGIITQTPKFLIGQEGQKLTLKCQQNFNHDTMYWYRQDSGKGLRLIYYSITENDLQKGDLSEGYDASREKKSSFSLTVTSAQKNEMTVFLCASSIRLASAETLYFGSGTRLTVL.

The first 21 residues, 1-21 (MNKWVFCWVTLCLLTVETTHG), serve as a signal peptide directing secretion. Residues 22–116 (DGGIITQTPK…EMTVFLCASS (95 aa)) are v segment. Residues C45 and C113 are joined by a disulfide bond. A d segment region spans residues 117–120 (IRLA). A j segment region spans residues 121–136 (SAETLYFGSGTRLTVL).

This is T-cell receptor beta chain V region LB2 from Mus musculus (Mouse).